The sequence spans 242 residues: AA9 family lytic polysaccharide monooxygenase F (242 aa).

The first 20 residues, 1–20 (MVQFKLSTASLLALASYAAA), serve as a signal peptide directing secretion. H21 serves as a coordination point for Cu(2+). Positions 31 to 53 (GQTYPGADPHNPNPESPGWQAEN) are disordered. 2 disulfide bridges follow: C71/C192 and C112/C116. H101 contributes to the Cu(2+) binding site. 2 residues coordinate O2: H178 and Q187. Position 189 (Y189) interacts with Cu(2+).

This sequence belongs to the polysaccharide monooxygenase AA9 family. Requires Cu(2+) as cofactor.

It localises to the secreted. It catalyses the reaction [(1-&gt;4)-beta-D-glucosyl]n+m + reduced acceptor + O2 = 4-dehydro-beta-D-glucosyl-[(1-&gt;4)-beta-D-glucosyl]n-1 + [(1-&gt;4)-beta-D-glucosyl]m + acceptor + H2O.. Lytic polysaccharide monooxygenase (LPMO) that depolymerizes crystalline and amorphous polysaccharides via the oxidation of scissile alpha- or beta-(1-4)-glycosidic bonds, yielding C1 or C4 oxidation products. Catalysis by LPMOs requires the reduction of the active-site copper from Cu(II) to Cu(I) by a reducing agent and H(2)O(2) or O(2) as a cosubstrate. Active on hemicelluloses, including xylan, glucomannan, and xyloglucan. Shows clear activity on cellooligosaccharides, generating C4 oxidation products. Has no activity on ivory nut mannan (INM), a linear beta-1,4-linked mannan without substitutions. The sequence is that of AA9 family lytic polysaccharide monooxygenase F from Malbranchea cinnamomea (Thermophilic fungus).